The following is a 291-amino-acid chain: G1/S-specific cyclin-D2 (291 aa).

Residues T261–L291 are disordered. The span at Q279–L291 shows a compositional bias: polar residues. T282 is subject to Phosphothreonine.

It belongs to the cyclin family. Cyclin D subfamily. In terms of assembly, interacts with the cdk4 and cdk6 protein kinases to form a serine/threonine kinase holoenzyme complex. The cyclin subunit imparts substrate specificity to the complex. Phosphorylation at Thr-282 by MAP kinases is required for ubiquitination and degradation by the DCX(AMBRA1) complex. In terms of processing, ubiquitinated by the DCX(AMBRA1) complex during the transition from G1 to S cell phase, leading to its degradation: ubiquitination is dependent on Thr-282 phosphorylation. The DCX(AMBRA1) complex represents the major regulator of CCND2 stability during the G1/S transition.

The protein localises to the nucleus. The protein resides in the cytoplasm. Its subcellular location is the nucleus membrane. Regulatory component of the cyclin D2-CDK4 (DC) complex that phosphorylates and inhibits members of the retinoblastoma (RB) protein family including RB1 and regulates the cell-cycle during G(1)/S transition. Phosphorylation of RB1 allows dissociation of the transcription factor E2F from the RB/E2F complex and the subsequent transcription of E2F target genes which are responsible for the progression through the G(1) phase. Hypophosphorylates RB1 in early G(1) phase. Cyclin D-CDK4 complexes are major integrators of various mitogenenic and antimitogenic signals. This chain is G1/S-specific cyclin-D2 (ccnd2), found in Xenopus laevis (African clawed frog).